The sequence spans 623 residues: Frizzled and smoothened-like protein M (623 aa).

Residues 1–18 (MKSIFIIIFILYVFQVNS) form the signal peptide. Topologically, residues 19–243 (QTIYPIDPSG…WDQLYNLSNT (225 aa)) are extracellular. In terms of domain architecture, FZ spans 25 to 163 (DPSGKCEQYI…NYSEFNLTNY (139 aa)). 2 cysteine pairs are disulfide-bonded: cysteine 30–cysteine 100 and cysteine 42–cysteine 93. Asparagine 57, asparagine 106, asparagine 109, asparagine 154, asparagine 159, asparagine 169, asparagine 199, and asparagine 239 each carry an N-linked (GlcNAc...) asparagine glycan. The helical transmembrane segment at 244 to 264 (LAVLSTFGSLYLLVTFIILNP) threads the bilayer. Residues 265–273 (KVTSFDRMY) are Cytoplasmic-facing. A helical transmembrane segment spans residues 274-294 (GFFNGSVFMMSLSGVILFIAG). The Extracellular segment spans residues 295 to 317 (GPRALIKDGGARISVFEDPLCSS). Residues 318-338 (TGFIFQLFAINAILFWAYMGF) form a helical membrane-spanning segment. Over 339–354 (DLWWRVKYITKPLNIQ) the chain is Cytoplasmic. Residues 355 to 375 (KYYVPIAFTISFIFSVIPLAT) traverse the membrane as a helical segment. The Extracellular portion of the chain corresponds to 376 to 397 (KNYRMVRGNIHCWVHKAVLQNT). Residues 398–418 (LFFGPLGLTLTISTGFIGLVI) form a helical membrane-spanning segment. At 419–439 (YEIYKIVKATGRGGIMKLEIK) the chain is on the cytoplasmic side. The chain crosses the membrane as a helical span at residues 440–460 (PILNIVLIYFSFVYIFAFNFH). At 461 to 494 (NDNNSKNTYGSIDEFFQCTLESDDPSKCTVGGPS) the chain is on the extracellular side. N-linked (GlcNAc...) asparagine glycosylation occurs at asparagine 463. Residues 495 to 515 (IGSLGYFIYCIRIYGIYCFFL) traverse the membrane as a helical segment. Residues 516 to 623 (QGLNERAFKI…DIEIGSVNIK (108 aa)) are Cytoplasmic-facing. The disordered stretch occupies residues 552 to 590 (PSESGNSSTTAGTSTTINNSNINKKNNNSKPTLSTMDSN). Over residues 555 to 580 (SGNSSTTAGTSTTINNSNINKKNNNS) the composition is skewed to low complexity.

It belongs to the G-protein coupled receptor Fz/Smo family.

The protein resides in the membrane. The protein is Frizzled and smoothened-like protein M (fslM-1) of Dictyostelium discoideum (Social amoeba).